The primary structure comprises 77 residues: uncharacterized protein (77 aa).

It to E.coli YdfK.

This is an uncharacterized protein from Escherichia coli (strain K12).